A 735-amino-acid polypeptide reads, in one-letter code: Transmembrane channel-like protein 7 (735 aa).

Over 1–164 the chain is Extracellular; the sequence is MSEFGAGAEL…QSYFSFLRFL (164 aa). Residues 165–185 traverse the membrane as a helical segment; that stretch reads VLLNFLMFILMFSFVTLPAVI. Residues 186-233 lie on the Cytoplasmic side of the membrane; sequence SNYGIFNSSSTKISPNNTEPYCTVYTPSGNKGLVYFYTYLKDLLTGTG. The chain crosses the membrane as a helical span at residues 234–254; sequence FLEVTVLFYGYYTIDAAWFSV. Residues 255–258 lie on the Extracellular side of the membrane; sequence LRYN. Residues 259–279 form a helical membrane-spanning segment; sequence LPLAYLLTTFAYLALSFVWII. The Cytoplasmic portion of the chain corresponds to 280–355; sequence KRSVERFRQH…TMKEKLQIYS (76 aa). Residues 356-376 traverse the membrane as a helical segment; the sequence is LRIFINIIVIAVLSGCFYSIY. Residues 377–403 lie on the Extracellular side of the membrane; that stretch reads RATVFSQENSSVSIRRNVMIANLLVQY. Asparagine 385 carries an N-linked (GlcNAc...) asparagine glycan. Residues 404–424 form a helical membrane-spanning segment; sequence LPSIVITSANFIAPQIFSFLI. The Cytoplasmic segment spans residues 425–436; the sequence is RFEDYSAAFEIR. Residues 437-457 traverse the membrane as a helical segment; it reads LTLIRCVFVRLANVGVLLFSL. Residues 458–488 lie on the Extracellular side of the membrane; the sequence is WSQIHCDNDQCKACGYDYELYPCWESAVGQE. A helical membrane pass occupies residues 489-509; that stretch reads MYKLLIFDFMIIIAMTLFVDF. The Cytoplasmic segment spans residues 510–548; sequence PRKLLVTYCSWKLVQWWGLQEFGISDNVLEIIYGQTICW. Residues 549-569 traverse the membrane as a helical segment; sequence IGTFFSPLLPAIATIKYFIIF. The Extracellular segment spans residues 570-594; it reads YIKKISLIHTRKPASRPIRASSSNF. The chain crosses the membrane as a helical span at residues 595–615; sequence FFLAVLLIGLILAFVPLGVSI. At 616–634 the chain is on the cytoplasmic side; sequence ALISSSKACGPFRNFNTSW. A helical membrane pass occupies residues 635–655; that stretch reads AIVPYTILEFPIGLQKFLYGI. At 656–658 the chain is on the extracellular side; the sequence is ASE. A helical transmembrane segment spans residues 659–679; the sequence is AFAVPFFVIACLFMFYFIALA. At 680–735 the chain is on the cytoplasmic side; that stretch reads GAHKRVVEQLREQLVTESRDKLFLLEKLSEAQKNSGKPQKARKLTSSWLLEPLDKG. Positions 710 to 735 are disordered; that stretch reads AQKNSGKPQKARKLTSSWLLEPLDKG.

It belongs to the TMC family.

It is found in the membrane. Functionally, probable component of an ion channel. This chain is Transmembrane channel-like protein 7 (Tmc7), found in Gallus gallus (Chicken).